The sequence spans 173 residues: dCTP deaminase, dUMP-forming (173 aa).

Residues 93 to 98 (RSSIGR), aspartate 111, 119 to 121 (TLE), glutamine 138, and tyrosine 151 each bind dCTP. The Proton donor/acceptor role is filled by glutamate 121.

The protein belongs to the dCTP deaminase family. In terms of assembly, homotrimer.

The enzyme catalyses dCTP + 2 H2O = dUMP + NH4(+) + diphosphate. Its pathway is pyrimidine metabolism; dUMP biosynthesis; dUMP from dCTP: step 1/1. Bifunctional enzyme that catalyzes both the deamination of dCTP to dUTP and the hydrolysis of dUTP to dUMP without releasing the toxic dUTP intermediate. In Cytophaga hutchinsonii (strain ATCC 33406 / DSM 1761 / CIP 103989 / NBRC 15051 / NCIMB 9469 / D465), this protein is dCTP deaminase, dUMP-forming.